The sequence spans 639 residues: MLMSKAPKLGNLLSKNSIKIVSGSKLRCNLKYINVRYISDTPDKVFTKLSDENDPQRDAFFKYSWGSWMKNDAIEKEKRVTKFSIEGLNDVLNDIYEQTKVEAKVTKEGAIKPPSFNKNLTVSLPHNLTVKNIGVINPNEKVQITSMASIHEGKHHRIYKIDTNLGKSFVLRVPYALENEDTIAQRLKSEVASMDFADLKLGIKVPKTYCFGINGLNPIRQPFILQEYIDGKLLMRDWSPLENDTSDGKPPVALQDVINKLSEFQSKLISMKFNGFGSIYFAKDAEELENVPELYDNETNEELKGRWKLGYSVERCLWKKKSFLPTDKLKTFLGPWSINKPTDIIRATGLLEAENAKVRLGLKEADSSSEAVESGVLKSQVATFENLVKLAPSLINSETKSIPNISDLLLPRLKHPDLDPMNVLVTENNEVYLLDFEGSSIKPLILQNAPQFVAYDGPKVYNIEKEVPDYEKLSDSEKAQYEFMYKRTRNQFLWEMAFNKTNPEFISIVAPPVKLLRSPYIAAIERKTDEEYILVDEAMIQLKEIWDIFTKNGLVKNSPYPIEYTTEQLEQHGKDLLKFHEKLISQPFAATQGWIPQDMFENLVAGGVLVKNKSGDYEVSSEAQSEVQSEVQSSTENKD.

A mitochondrion-targeting transit peptide spans 1-45; it reads MLMSKAPKLGNLLSKNSIKIVSGSKLRCNLKYINVRYISDTPDKV. The disordered stretch occupies residues 619–639; sequence VSSEAQSEVQSEVQSSTENKD.

The protein belongs to the AIM9 family.

It is found in the mitochondrion. The chain is Altered inheritance of mitochondria protein 9, mitochondrial (AIM9) from Vanderwaltozyma polyspora (strain ATCC 22028 / DSM 70294 / BCRC 21397 / CBS 2163 / NBRC 10782 / NRRL Y-8283 / UCD 57-17) (Kluyveromyces polysporus).